Here is a 613-residue protein sequence, read N- to C-terminus: Dihydroxy-acid dehydratase (613 aa).

Residue D81 participates in Mg(2+) binding. [2Fe-2S] cluster is bound at residue C122. 2 residues coordinate Mg(2+): D123 and K124. Position 124 is an N6-carboxylysine (K124). [2Fe-2S] cluster is bound at residue C193. E489 is a binding site for Mg(2+). S515 functions as the Proton acceptor in the catalytic mechanism.

The protein belongs to the IlvD/Edd family. As to quaternary structure, homodimer. [2Fe-2S] cluster serves as cofactor. It depends on Mg(2+) as a cofactor.

The enzyme catalyses (2R)-2,3-dihydroxy-3-methylbutanoate = 3-methyl-2-oxobutanoate + H2O. It carries out the reaction (2R,3R)-2,3-dihydroxy-3-methylpentanoate = (S)-3-methyl-2-oxopentanoate + H2O. The protein operates within amino-acid biosynthesis; L-isoleucine biosynthesis; L-isoleucine from 2-oxobutanoate: step 3/4. It functions in the pathway amino-acid biosynthesis; L-valine biosynthesis; L-valine from pyruvate: step 3/4. Its function is as follows. Functions in the biosynthesis of branched-chain amino acids. Catalyzes the dehydration of (2R,3R)-2,3-dihydroxy-3-methylpentanoate (2,3-dihydroxy-3-methylvalerate) into 2-oxo-3-methylpentanoate (2-oxo-3-methylvalerate) and of (2R)-2,3-dihydroxy-3-methylbutanoate (2,3-dihydroxyisovalerate) into 2-oxo-3-methylbutanoate (2-oxoisovalerate), the penultimate precursor to L-isoleucine and L-valine, respectively. The protein is Dihydroxy-acid dehydratase of Pseudomonas putida (strain GB-1).